A 371-amino-acid polypeptide reads, in one-letter code: Queuine tRNA-ribosyltransferase (371 aa).

Residue aspartate 93 is the Proton acceptor of the active site. Substrate is bound by residues 93–97 (DSGGF), aspartate 147, glutamine 191, and glycine 218. An RNA binding region spans residues 249–255 (GVGTPLD). The active-site Nucleophile is the aspartate 268. An RNA binding; important for wobble base 34 recognition region spans residues 273-277 (TRNAR). Zn(2+) contacts are provided by cysteine 306, cysteine 308, cysteine 311, and histidine 337.

It belongs to the queuine tRNA-ribosyltransferase family. Homodimer. Within each dimer, one monomer is responsible for RNA recognition and catalysis, while the other monomer binds to the replacement base PreQ1. Requires Zn(2+) as cofactor.

The catalysed reaction is 7-aminomethyl-7-carbaguanine + guanosine(34) in tRNA = 7-aminomethyl-7-carbaguanosine(34) in tRNA + guanine. It participates in tRNA modification; tRNA-queuosine biosynthesis. Functionally, catalyzes the base-exchange of a guanine (G) residue with the queuine precursor 7-aminomethyl-7-deazaguanine (PreQ1) at position 34 (anticodon wobble position) in tRNAs with GU(N) anticodons (tRNA-Asp, -Asn, -His and -Tyr). Catalysis occurs through a double-displacement mechanism. The nucleophile active site attacks the C1' of nucleotide 34 to detach the guanine base from the RNA, forming a covalent enzyme-RNA intermediate. The proton acceptor active site deprotonates the incoming PreQ1, allowing a nucleophilic attack on the C1' of the ribose to form the product. After dissociation, two additional enzymatic reactions on the tRNA convert PreQ1 to queuine (Q), resulting in the hypermodified nucleoside queuosine (7-(((4,5-cis-dihydroxy-2-cyclopenten-1-yl)amino)methyl)-7-deazaguanosine). The protein is Queuine tRNA-ribosyltransferase of Lawsonia intracellularis (strain PHE/MN1-00).